Reading from the N-terminus, the 192-residue chain is Elongation factor P (192 aa).

The protein belongs to the elongation factor P family.

It localises to the cytoplasm. Its pathway is protein biosynthesis; polypeptide chain elongation. In terms of biological role, involved in peptide bond synthesis. Stimulates efficient translation and peptide-bond synthesis on native or reconstituted 70S ribosomes in vitro. Probably functions indirectly by altering the affinity of the ribosome for aminoacyl-tRNA, thus increasing their reactivity as acceptors for peptidyl transferase. The chain is Elongation factor P from Borrelia turicatae (strain 91E135).